Here is a 90-residue protein sequence, read N- to C-terminus: MYSLELSLRYSPFPIAIQKKEFEDVKRIYEEIKNSMNEPLETSNLVELRCDKVQDKLIAVRAQEIISVQIYEKSSVAGGAKRPGFSLDID.

The protein belongs to the UPF0367 family.

The chain is UPF0367 protein PMT9312_0127 from Prochlorococcus marinus (strain MIT 9312).